The primary structure comprises 142 residues: Large ribosomal subunit protein uL11 (142 aa).

It belongs to the universal ribosomal protein uL11 family. In terms of assembly, part of the ribosomal stalk of the 50S ribosomal subunit. Interacts with L10 and the large rRNA to form the base of the stalk. L10 forms an elongated spine to which L12 dimers bind in a sequential fashion forming a multimeric L10(L12)X complex. One or more lysine residues are methylated.

Forms part of the ribosomal stalk which helps the ribosome interact with GTP-bound translation factors. In Bradyrhizobium sp. (strain BTAi1 / ATCC BAA-1182), this protein is Large ribosomal subunit protein uL11.